Here is a 694-residue protein sequence, read N- to C-terminus: MNMETKNGSPVPAGDYSGERDSADITEHEQMDVKPKTNGDSKADRKAANAKDPSRPRRKKARRACFACQRAHLTCGDERPCQRCIKRGLQDACHDGVRKKAKYLHDAPDGALMPAVSSNTNLYNNTLRNNLPISRNGTNAVNSNQQHSQQHPQQPTNPTNNNFYPTPQTQTGSYNPYQESSMGQSPFTTQSPVSPTFNMKSSTNGRNPSLSSTVNQQPTPSTALSGDTSQSQNPFAGPFFDPSDPALFNFDLSSMNFENRYGALEFGMLGHMATGAAGDSPTDSAGQRGSIGRSGSAQFSTPAPGFGESPGNQPFMFGDPLLNEWSAGPASGQHVNVGGVYAPNTMLPEHMKANAPHAFAIESGPASFTSPGSAPSPNIPTAAFDDGPFNNIAPAPKSNSLVPNGQRQVTASILKHPNLQVGPKRRHRNPSSIYESVKEPYAYTSGFHNLTAFIQRRFTPQKTVRIAKALASIRPSFIATTKTLNRDDLIFMEKCFQRTLWEYEDFINACGTPTIVCRRTGEIAAVGKEFSILTGWKKDVLLGKETNLNVNTGGSAVPQSGTTSRGSFTPRGSTLENSGTGRPQPVFLAELLDDDSVVEFYEDFARLAFGDSRGSVMTRCKLLKYKTKEDMEVAQSDDNGKWNNHLRKGGIAGEAGMNQLGFKDGKVDCAYCWTVKRDVFDIPMLIVMNFLPCI.

A disordered region spans residues 1–61 (MNMETKNGSP…DPSRPRRKKA (61 aa)). Over residues 17–55 (SGERDSADITEHEQMDVKPKTNGDSKADRKAANAKDPSR) the composition is skewed to basic and acidic residues. Positions 65-93 (CFACQRAHLTCGDERPCQRCIKRGLQDAC) form a DNA-binding region, zn(2)-C6 fungal-type. Disordered stretches follow at residues 126–240 (TLRN…GPFF), 276–300 (AAGDSPTDSAGQRGSIGRSGSAQFS), and 552–582 (TGGSAVPQSGTTSRGSFTPRGSTLENSGTGR). The segment covering 132–141 (PISRNGTNAV) has biased composition (polar residues). Residues 142–171 (NSNQQHSQQHPQQPTNPTNNNFYPTPQTQT) are compositionally biased toward low complexity. Polar residues-rich tracts occupy residues 172–234 (GSYN…SQNP), 281–300 (PTDSAGQRGSIGRSGSAQFS), and 552–581 (TGGSAVPQSGTTSRGSFTPRGSTLENSGTG).

Belongs to the ERT1/acuK family.

It localises to the nucleus. Functionally, transcription factor which regulates nonfermentable carbon utilization. Activator of gluconeogenetic genes. The chain is Transcription activator of gluconeogenesis Pc22g08580 from Penicillium rubens (strain ATCC 28089 / DSM 1075 / NRRL 1951 / Wisconsin 54-1255) (Penicillium chrysogenum).